The following is a 393-amino-acid chain: Major outer membrane protein P.IA (393 aa).

An N-terminal signal peptide occupies residues 1-19 (MRKKLTALVLSALPLAAVA).

It belongs to the Gram-negative porin family. In terms of assembly, homotrimer.

Its subcellular location is the cell outer membrane. In terms of biological role, serves as a slightly cation selective porin. Major antigen on the gonococcal cell surface and it may have pathogenic properties in addition to its porin activity. The protein is Major outer membrane protein P.IA (porA) of Neisseria meningitidis serogroup C.